Consider the following 191-residue polypeptide: MTMLRPAILLFILLTLVTGGLYPLLTTALGQWWFTDQANGSLIIQNGENRGSRLIGQNFTDARYFQGRPSATAGSPYNPMASGGSNLAGSNPELDNAIGERVAALRAANPQASRDVPVELVTASASGLDYSLTSESVAWQIPRVAAARQLTTEQVRKVVEEHTQKPLVNFIGMPVANIVELNLALDAQRKN.

A helical transmembrane segment spans residues 6–26 (PAILLFILLTLVTGGLYPLLT).

It belongs to the KdpC family. In terms of assembly, the system is composed of three essential subunits: KdpA, KdpB and KdpC.

It is found in the cell inner membrane. Its function is as follows. Part of the high-affinity ATP-driven potassium transport (or Kdp) system, which catalyzes the hydrolysis of ATP coupled with the electrogenic transport of potassium into the cytoplasm. This subunit acts as a catalytic chaperone that increases the ATP-binding affinity of the ATP-hydrolyzing subunit KdpB by the formation of a transient KdpB/KdpC/ATP ternary complex. This is Potassium-transporting ATPase KdpC subunit from Enterobacter sp. (strain 638).